Consider the following 498-residue polypeptide: Putative ABC transporter ATP-binding protein MM_2387 (498 aa).

ABC transporter domains are found at residues 2–242 and 258–490; these read IELR…TSKS and ISIK…VEEK. ATP contacts are provided by residues 36–43 and 290–297; these read GHSAAGKT and GENGSGKT.

This sequence belongs to the ABC transporter superfamily.

The protein resides in the cell membrane. Probably part of an ABC transporter complex. Responsible for energy coupling to the transport system. The chain is Putative ABC transporter ATP-binding protein MM_2387 from Methanosarcina mazei (strain ATCC BAA-159 / DSM 3647 / Goe1 / Go1 / JCM 11833 / OCM 88) (Methanosarcina frisia).